The primary structure comprises 1160 residues: Protein GIGANTEA (1160 aa).

Polar residues predominate over residues Cys158–Glu169. Disordered regions lie at residues Cys158 to Leu188, Gly600 to Cys629, and Pro800 to His830. A compositionally biased stretch (basic and acidic residues) spans Ser170–Pro187. The span at Val801–Asn812 shows a compositional bias: basic and acidic residues.

Belongs to the GIGANTEA family.

The protein resides in the nucleus. In terms of biological role, involved in regulation of circadian rhythm, and in the control of the photoperiodic flowering. Acts as a suppressor of flowering under short-day (SD) and long-day (LD) conditions. Activates Hd1/CONSTANS gene. This Oryza sativa subsp. japonica (Rice) protein is Protein GIGANTEA (GI).